A 35-amino-acid polypeptide reads, in one-letter code: Photosystem II reaction center protein T (35 aa).

The chain crosses the membrane as a helical span at residues 3–23; it reads ALVYTFLLVSTLGIIFFAIFF.

It belongs to the PsbT family. As to quaternary structure, PSII is composed of 1 copy each of membrane proteins PsbA, PsbB, PsbC, PsbD, PsbE, PsbF, PsbH, PsbI, PsbJ, PsbK, PsbL, PsbM, PsbT, PsbY, PsbZ, Psb30/Ycf12, at least 3 peripheral proteins of the oxygen-evolving complex and a large number of cofactors. It forms dimeric complexes.

The protein resides in the plastid. It is found in the chloroplast thylakoid membrane. Functionally, found at the monomer-monomer interface of the photosystem II (PS II) dimer, plays a role in assembly and dimerization of PSII. PSII is a light-driven water plastoquinone oxidoreductase, using light energy to abstract electrons from H(2)O, generating a proton gradient subsequently used for ATP formation. In Metasequoia glyptostroboides (Dawn redwood), this protein is Photosystem II reaction center protein T.